The sequence spans 199 residues: Recombination protein RecR (199 aa).

A C4-type zinc finger spans residues 57–72; the sequence is CSICGNITESDPCEIC. Residues 80-176 enclose the Toprim domain; that stretch reads STIMVVEQPK…KVTRLAAGLA (97 aa).

Belongs to the RecR family.

In terms of biological role, may play a role in DNA repair. It seems to be involved in an RecBC-independent recombinational process of DNA repair. It may act with RecF and RecO. In Lactobacillus johnsonii (strain CNCM I-12250 / La1 / NCC 533), this protein is Recombination protein RecR.